A 487-amino-acid chain; its full sequence is Betaine aldehyde dehydrogenase (487 aa).

K(+) contacts are provided by Ile-27 and Asp-93. 149–151 contributes to the NAD(+) binding site; the sequence is GAW. The active-site Charge relay system is the Lys-161. NAD(+) is bound by residues 175 to 178 and 228 to 231; these read KPSE and SVPT. Glu-249 functions as the Proton acceptor in the catalytic mechanism. NAD(+)-binding residues include Gly-251, Cys-283, and Glu-384. Catalysis depends on Cys-283, which acts as the Nucleophile. Cys-283 bears the Cysteine sulfenic acid (-SOH) mark. 2 residues coordinate K(+): Lys-454 and Gly-457. The active-site Charge relay system is Glu-461.

The protein belongs to the aldehyde dehydrogenase family. As to quaternary structure, dimer of dimers. Requires K(+) as cofactor.

The catalysed reaction is betaine aldehyde + NAD(+) + H2O = glycine betaine + NADH + 2 H(+). It participates in amine and polyamine biosynthesis; betaine biosynthesis via choline pathway; betaine from betaine aldehyde: step 1/1. In terms of biological role, involved in the biosynthesis of the osmoprotectant glycine betaine. Catalyzes the irreversible oxidation of betaine aldehyde to the corresponding acid. The sequence is that of Betaine aldehyde dehydrogenase from Mesorhizobium japonicum (strain LMG 29417 / CECT 9101 / MAFF 303099) (Mesorhizobium loti (strain MAFF 303099)).